Reading from the N-terminus, the 410-residue chain is Mating-type locus allele B7 protein (410 aa).

Residues 1–110 (MSSDPNFSLT…VNVGSPAVGC (110 aa)) form a variable domain between B alleles region. The segment at residues 107–184 (AVGCRNLSED…NARRRSGWSH (78 aa)) is a DNA-binding region (homeobox; TALE-type). Residues 111–410 (RNLSEDLPAY…PFLCLSVAFV (300 aa)) are highly conserved between B alleles. Disordered stretches follow at residues 202–225 (RAKL…SNNL), 278–336 (TPKP…PELS), and 374–394 (ARGN…QPDE). Residues 276-308 (KKTPKPGMPRPVTTVAKRQPARKTKPAAKPNSR) carry the Nuclear localization signal motif. Positions 306–336 (NSRTANPRASTTPSIDSTLDSSKLESTPELS) are enriched in polar residues. Residues 333-410 (PELSMCSTAD…PFLCLSVAFV (78 aa)) are not essential for B7 function. A compositionally biased stretch (basic residues) spans 375-388 (RGNRKVKALPKRAG).

This sequence belongs to the TALE/M-ATYP homeobox family.

The protein localises to the nucleus. Functionally, the B locus has at least 25 alleles, and any combination of two different B alleles yields a multimeric regulatory protein, that activates genes responsible for the pathogenicity and for the sexual development of the fungus within the corn plant. The sequence is that of Mating-type locus allele B7 protein from Mycosarcoma maydis (Corn smut fungus).